A 365-amino-acid polypeptide reads, in one-letter code: Phospho-N-acetylmuramoyl-pentapeptide-transferase (365 aa).

10 helical membrane passes run 19-39 (TLLILLWALALALMALLSSWA), 49-69 (LLIALGFTALVTALIGMAVVP), 92-112 (AGTPTMGGIFFVPVAVAIAVV), 116-136 (FNPDVIVVGLVTLGYMAIGWV), 156-176 (LFLQVAIAVIFCTWLFFYGPT), 183-203 (IMQFVLPLGFLFWLVATFALV), 215-235 (VDGLAAGTGAIAFVGLGLLVA), 238-258 (NPALAFFCCAMAGGCIGFVHH), 279-299 (LAAVGIMTGNLWGLLLISGIF), and 345-365 (QIVGSFYLINTLLAIVAMATA).

It belongs to the glycosyltransferase 4 family. MraY subfamily. The cofactor is Mg(2+).

It localises to the cell inner membrane. The enzyme catalyses UDP-N-acetyl-alpha-D-muramoyl-L-alanyl-gamma-D-glutamyl-meso-2,6-diaminopimeloyl-D-alanyl-D-alanine + di-trans,octa-cis-undecaprenyl phosphate = di-trans,octa-cis-undecaprenyl diphospho-N-acetyl-alpha-D-muramoyl-L-alanyl-D-glutamyl-meso-2,6-diaminopimeloyl-D-alanyl-D-alanine + UMP. Its pathway is cell wall biogenesis; peptidoglycan biosynthesis. In terms of biological role, catalyzes the initial step of the lipid cycle reactions in the biosynthesis of the cell wall peptidoglycan: transfers peptidoglycan precursor phospho-MurNAc-pentapeptide from UDP-MurNAc-pentapeptide onto the lipid carrier undecaprenyl phosphate, yielding undecaprenyl-pyrophosphoryl-MurNAc-pentapeptide, known as lipid I. This chain is Phospho-N-acetylmuramoyl-pentapeptide-transferase, found in Synechocystis sp. (strain ATCC 27184 / PCC 6803 / Kazusa).